Consider the following 83-residue polypeptide: Cytochrome b559 subunit alpha (83 aa).

The helical transmembrane segment at 21 to 35 threads the bilayer; it reads IIHSITIPSLFIAGW. H23 provides a ligand contact to heme.

Heterodimer of an alpha subunit and a beta subunit. PSII is composed of 1 copy each of membrane proteins PsbA, PsbB, PsbC, PsbD, PsbE, PsbF, PsbH, PsbI, PsbJ, PsbK, PsbL, PsbM, PsbT, PsbX, PsbY, PsbZ, Psb30/Ycf12, at least 3 peripheral proteins of the oxygen-evolving complex and a large number of cofactors. It forms dimeric complexes. Heme b is required as a cofactor.

It is found in the plastid. The protein localises to the chloroplast thylakoid membrane. This b-type cytochrome is tightly associated with the reaction center of photosystem II (PSII). PSII is a light-driven water:plastoquinone oxidoreductase that uses light energy to abstract electrons from H(2)O, generating O(2) and a proton gradient subsequently used for ATP formation. It consists of a core antenna complex that captures photons, and an electron transfer chain that converts photonic excitation into a charge separation. The sequence is that of Cytochrome b559 subunit alpha from Pisum sativum (Garden pea).